We begin with the raw amino-acid sequence, 272 residues long: Energy-coupling factor transporter ATP-binding protein EcfA1 (272 aa).

The ABC transporter domain occupies 5 to 239 (IKIDNLKYSY…RKALHENGLE (235 aa)). Position 37–44 (37–44 (GHNGSGKS)) interacts with ATP. Glu163 serves as the catalytic Proton acceptor.

Belongs to the ABC transporter superfamily. Energy-coupling factor EcfA family. As to quaternary structure, forms a stable energy-coupling factor (ECF) transporter complex probably composed of 2 membrane-embedded substrate-binding proteins (S component), 2 ATP-binding proteins (A component) and 2 transmembrane proteins (T component). This complex interacts with a number of substrate-specific components, including FolT, PanT and RibU for 5-formyltetrahydrofolate, pantothenate and riboflavin respectively.

It localises to the cell membrane. ATP-binding (A) component of a common energy-coupling factor (ECF) ABC-transporter complex. Unlike classic ABC transporters this ECF transporter provides the energy necessary to transport a number of different substrates including 5-formyltetrahydrofolate, pantothenate and riboflavin. Expression of the complex plus FolT in E.coli allows 5-formyltetrahydrofolate uptake; 5-formyltetrahydrofolate is not taken up in the absence of FolT or the EcfA1A2T complex. This chain is Energy-coupling factor transporter ATP-binding protein EcfA1, found in Leuconostoc mesenteroides subsp. mesenteroides (strain ATCC 8293 / DSM 20343 / BCRC 11652 / CCM 1803 / JCM 6124 / NCDO 523 / NBRC 100496 / NCIMB 8023 / NCTC 12954 / NRRL B-1118 / 37Y).